The sequence spans 125 residues: Small ribosomal subunit protein eS8 (125 aa).

The protein belongs to the eukaryotic ribosomal protein eS8 family. Part of the 30S ribosomal subunit.

This Methanosarcina mazei (strain ATCC BAA-159 / DSM 3647 / Goe1 / Go1 / JCM 11833 / OCM 88) (Methanosarcina frisia) protein is Small ribosomal subunit protein eS8.